The sequence spans 174 residues: Shikimate kinase 2 (174 aa).

Position 12 to 17 (12 to 17 (GAGKTT)) interacts with ATP. Mg(2+)-binding residues include Thr-16 and Asp-32. Substrate-binding residues include Asp-34, Arg-58, and Gly-79. Residues 112 to 126 (EEYPQDTQRPTLTGR) form an LID domain region. Arg-120 serves as a coordination point for ATP. Substrate is bound at residue Arg-139.

The protein belongs to the shikimate kinase family. AroL subfamily. Monomer. Requires Mg(2+) as cofactor.

Its subcellular location is the cytoplasm. It catalyses the reaction shikimate + ATP = 3-phosphoshikimate + ADP + H(+). It participates in metabolic intermediate biosynthesis; chorismate biosynthesis; chorismate from D-erythrose 4-phosphate and phosphoenolpyruvate: step 5/7. Functionally, catalyzes the specific phosphorylation of the 3-hydroxyl group of shikimic acid using ATP as a cosubstrate. This is Shikimate kinase 2 from Serratia proteamaculans (strain 568).